The primary structure comprises 350 residues: GTPase Obg (350 aa).

Positions 1 to 159 constitute an Obg domain; the sequence is MKLVDEAEIL…RLLKLELRLL (159 aa). The tract at residues 127–146 is disordered; it reads NMHFKSSVNRAPRQSTTGEE. Residues 130–143 are compositionally biased toward polar residues; sequence FKSSVNRAPRQSTT. Positions 160 to 337 constitute an OBG-type G domain; it reads ADVGLLGFPN…IMKDVMAFFD (178 aa). Residues 166-173, 191-195, 213-216, 287-290, and 318-320 contribute to the GTP site; these read GFPNAGKS, FTTLY, DVPG, NKAD, and SAL. Serine 173 and threonine 193 together coordinate Mg(2+).

This sequence belongs to the TRAFAC class OBG-HflX-like GTPase superfamily. OBG GTPase family. In terms of assembly, monomer. Mg(2+) serves as cofactor.

The protein localises to the cytoplasm. An essential GTPase which binds GTP, GDP and possibly (p)ppGpp with moderate affinity, with high nucleotide exchange rates and a fairly low GTP hydrolysis rate. Plays a role in control of the cell cycle, stress response, ribosome biogenesis and in those bacteria that undergo differentiation, in morphogenesis control. The sequence is that of GTPase Obg from Xanthomonas oryzae pv. oryzae (strain MAFF 311018).